Reading from the N-terminus, the 462-residue chain is Zinc finger CCCH domain-containing protein 8 (462 aa).

6 C3H1-type zinc fingers span residues arginine 105 to tryptophan 133, glutamine 156 to glutamate 184, arginine 209 to aspartate 237, arginine 288 to arginine 316, arginine 367 to aspartate 395, and arginine 422 to proline 450.

This chain is Zinc finger CCCH domain-containing protein 8, found in Oryza sativa subsp. japonica (Rice).